The sequence spans 663 residues: Alcohol oxidase 1 (663 aa).

8–38 (DILVLGGGSSGSCIAGRLANLDHSLKVGLIE) contacts FAD. Catalysis depends on His567, which acts as the Proton acceptor. The Microbody targeting signal motif lies at 661–663 (ARF).

Belongs to the GMC oxidoreductase family. As to quaternary structure, homooctamer. It depends on FAD as a cofactor.

Its subcellular location is the peroxisome matrix. The enzyme catalyses a primary alcohol + O2 = an aldehyde + H2O2. It participates in energy metabolism; methane degradation. In terms of biological role, major isoform of alcohol oxidase, which catalyzes the oxidation of methanol to formaldehyde and hydrogen peroxide, the first step in the methanol utilization pathway of methylotrophic yeasts. The chain is Alcohol oxidase 1 (AOX1) from Komagataella phaffii (strain ATCC 76273 / CBS 7435 / CECT 11047 / NRRL Y-11430 / Wegner 21-1) (Yeast).